The chain runs to 518 residues: Glutamate--cysteine ligase (518 aa).

The protein belongs to the glutamate--cysteine ligase type 1 family. Type 1 subfamily.

It catalyses the reaction L-cysteine + L-glutamate + ATP = gamma-L-glutamyl-L-cysteine + ADP + phosphate + H(+). It functions in the pathway sulfur metabolism; glutathione biosynthesis; glutathione from L-cysteine and L-glutamate: step 1/2. The polypeptide is Glutamate--cysteine ligase (Salmonella arizonae (strain ATCC BAA-731 / CDC346-86 / RSK2980)).